Consider the following 236-residue polypeptide: Alanyl-tRNA editing protein AlaX-M (236 aa).

Zn(2+) contacts are provided by His101, His105, and His205.

The protein belongs to the class-II aminoacyl-tRNA synthetase family. Editing domain AlaX-M subfamily. The cofactor is Zn(2+).

It is found in the cytoplasm. Functionally, functions in trans to edit the amino acid moiety from incorrectly charged Ser-tRNA(Ala). The chain is Alanyl-tRNA editing protein AlaX-M (alaXM) from Saccharolobus solfataricus (strain ATCC 35092 / DSM 1617 / JCM 11322 / P2) (Sulfolobus solfataricus).